The following is a 126-amino-acid chain: Diadenosine hexaphosphate hydrolase (126 aa).

The Nudix hydrolase domain occupies 1 to 121 (MELGAGGVVF…EDLGLLEVAL (121 aa)). Residues 21–23 (DRM) and 30–32 (KGH) each bind substrate. The Nudix box signature appears at 31 to 52 (GHPEPGESLEEAAVREVWEETG). Residues glutamate 46 and glutamate 50 each contribute to the Mg(2+) site. Residues 66 to 68 (YVN), arginine 74, and glutamate 112 contribute to the substrate site.

It belongs to the Nudix hydrolase family. In terms of assembly, monomer. The cofactor is Mg(2+).

It catalyses the reaction P(1),P(6)-bis(5'-adenosyl) hexaphosphate + H2O = 2 ATP + 2 H(+). It carries out the reaction P(1),P(5)-bis(5'-adenosyl) pentaphosphate + H2O = ADP + ATP + 2 H(+). The catalysed reaction is P(1),P(4)-bis(5'-adenosyl) tetraphosphate + H2O = AMP + ATP + 2 H(+). Strongly inhibited by fluoride ions. Specifically hydrolyzes (di)adenosine polyphosphates but not ATP or diadenosine triphosphate, generating ATP as the product. Diadenosine hexaphosphate (Ap6A) is the preferred substrate and hydrolysis yields 2 ATP. It is the only enzyme that symmetrically hydrolyzes Ap6A. It also hydrolyzes diadenosine pentaphosphate (Ap5A), diadenosine tetraphosphate (Ap4A) and adenosine tetraphosphate (p4A). The polypeptide is Diadenosine hexaphosphate hydrolase (Thermus thermophilus).